The chain runs to 105 residues: Nucleoid-associated protein Dred_0043 (105 aa).

Belongs to the YbaB/EbfC family. As to quaternary structure, homodimer.

The protein resides in the cytoplasm. It localises to the nucleoid. Binds to DNA and alters its conformation. May be involved in regulation of gene expression, nucleoid organization and DNA protection. The chain is Nucleoid-associated protein Dred_0043 from Desulforamulus reducens (strain ATCC BAA-1160 / DSM 100696 / MI-1) (Desulfotomaculum reducens).